A 592-amino-acid chain; its full sequence is MAERRGPAGGGSGEVGGGRRAGGDRCPRRPPALPLLLLLWAAALPAGGQPAAQPAALSERGISIPDHGYCQPISIPLCTDIAYNQTIMPNLLGHTNQEDAGLEVHQFYPLVKVQCSAELKFFLCSMYAPVCTVLEQALPPCRSLCERARQGCEALMNKFGFQWPDTLRCEKFPVHGAGELCVGQNASERGTPTPALRPESWTSNPHRGGGAGGSGPGEARGRFSCPRALKVPSYLNYRFLGEKDCGAPCEPGRLYGLMYFGPEELRFSRTWIGIWSVLCCASTLFTVLTYLVDMKRFSYPERPIIFLSGCYTAVAVAYIAGFLLEERVVCNERFAEDGSRTVAQGTKREGCTILFMMLYFFGMASSIWWVILSLTWFLAAGMKWGHEAIEANSQYFHLAAWAVPAIKTITILALGQVDGDVLSGVCFVGINNVDALRGFVLAPLFVYLFIGTSFLLAGFVSLFRIRTIMKHDGTKTEKLEKLMVRIGIFSVLYTVPATIVIACYFYEQAFREQWERSWVTQSCKSYAIPCPNNHSSHHPPMSPDFTVFMIKYLMTLIVGITSGFWIWSGKTLNSWRKFYTRLTNSKQGETTV.

The interval 1-26 (MAERRGPAGGGSGEVGGGRRAGGDRC) is disordered. An N-terminal signal peptide occupies residues 1-48 (MAERRGPAGGGSGEVGGGRRAGGDRCPRRPPALPLLLLLWAAALPAGG). Residues 7 to 20 (PAGGGSGEVGGGRR) are compositionally biased toward gly residues. Topologically, residues 49 to 271 (QPAAQPAALS…PEELRFSRTW (223 aa)) are extracellular. Residues 65–184 (PDHGYCQPIS…HGAGELCVGQ (120 aa)) enclose the FZ domain. Intrachain disulfides connect Cys-70/Cys-131, Cys-78/Cys-124, Cys-115/Cys-152, Cys-141/Cys-181, and Cys-145/Cys-169. N-linked (GlcNAc...) asparagine glycosylation occurs at Asn-84. N-linked (GlcNAc...) asparagine glycosylation is present at Asn-185. The segment at 185-219 (NASERGTPTPALRPESWTSNPHRGGGAGGSGPGEA) is disordered. The span at 207-218 (RGGGAGGSGPGE) shows a compositional bias: gly residues. A helical membrane pass occupies residues 272 to 292 (IGIWSVLCCASTLFTVLTYLV). The Cytoplasmic portion of the chain corresponds to 293 to 303 (DMKRFSYPERP). Residues 304–324 (IIFLSGCYTAVAVAYIAGFLL) traverse the membrane as a helical segment. At 325 to 351 (EERVVCNERFAEDGSRTVAQGTKREGC) the chain is on the extracellular side. Residues 352 to 372 (TILFMMLYFFGMASSIWWVIL) form a helical membrane-spanning segment. Residues 373 to 394 (SLTWFLAAGMKWGHEAIEANSQ) are Cytoplasmic-facing. The chain crosses the membrane as a helical span at residues 395–415 (YFHLAAWAVPAIKTITILALG). The Extracellular portion of the chain corresponds to 416 to 438 (QVDGDVLSGVCFVGINNVDALRG). A helical membrane pass occupies residues 439 to 459 (FVLAPLFVYLFIGTSFLLAGF). Over 460 to 485 (VSLFRIRTIMKHDGTKTEKLEKLMVR) the chain is Cytoplasmic. A helical transmembrane segment spans residues 486 to 506 (IGIFSVLYTVPATIVIACYFY). Residues 507–546 (EQAFREQWERSWVTQSCKSYAIPCPNNHSSHHPPMSPDFT) lie on the Extracellular side of the membrane. N-linked (GlcNAc...) asparagine glycosylation is present at Asn-533. Residues 547–567 (VFMIKYLMTLIVGITSGFWIW) form a helical membrane-spanning segment. The Cytoplasmic portion of the chain corresponds to 568–592 (SGKTLNSWRKFYTRLTNSKQGETTV). The Lys-Thr-X-X-X-Trp motif, mediates interaction with the PDZ domain of Dvl family members motif lies at 570–575 (KTLNSW). Positions 590–592 (TTV) match the PDZ-binding motif.

Belongs to the G-protein coupled receptor Fz/Smo family. Expressed in the lens, otic placode (medial wall of the vesicle) and in epibranchial placode. Also expressed in the developing somites (dermomyotome).

The protein resides in the cell membrane. Functionally, receptor for Wnt proteins. Functions in the canonical Wnt/beta-catenin signaling pathway. The canonical Wnt/beta-catenin signaling pathway leads to the activation of disheveled proteins, inhibition of GSK-3 kinase, nuclear accumulation of beta-catenin and activation of Wnt target genes. A second signaling pathway involving PKC and calcium fluxes has been seen for some family members, but it is not yet clear if it represents a distinct pathway or if it can be integrated in the canonical pathway, as PKC seems to be required for Wnt-mediated inactivation of GSK-3 kinase. Both pathways seem to involve interactions with G-proteins. May be involved in transduction and intercellular transmission of polarity information during tissue morphogenesis and/or in differentiated tissues. In Gallus gallus (Chicken), this protein is Frizzled-1 (FZD1).